Consider the following 503-residue polypeptide: GTPase Obg (503 aa).

Residues 2–159 (PQFVDRVVLH…KDVILELKSM (158 aa)) enclose the Obg domain. The 181-residue stretch at 160–340 (ADVGLVGFPS…LKYALMDIVK (181 aa)) folds into the OBG-type G domain. GTP-binding positions include 166-173 (GFPSAGKS), 191-195 (FTTLV), 212-215 (DVPG), 292-295 (NKMD), and 321-323 (STV). Residues serine 173 and threonine 193 each contribute to the Mg(2+) site. The OCT domain maps to 371 to 444 (EFEVEADPSA…IGEITFEWDP (74 aa)). Over residues 457–476 (RGTDVRLEQNTRATPEERKR) the composition is skewed to basic and acidic residues. The disordered stretch occupies residues 457 to 503 (RGTDVRLEQNTRATPEERKRASQARRGLIDENDFGDGEVAERERWQG).

This sequence belongs to the TRAFAC class OBG-HflX-like GTPase superfamily. OBG GTPase family. In terms of assembly, monomer. The cofactor is Mg(2+).

The protein resides in the cytoplasm. An essential GTPase which binds GTP, GDP and possibly (p)ppGpp with moderate affinity, with high nucleotide exchange rates and a fairly low GTP hydrolysis rate. Plays a role in control of the cell cycle, stress response, ribosome biogenesis and in those bacteria that undergo differentiation, in morphogenesis control. The polypeptide is GTPase Obg (Corynebacterium jeikeium (strain K411)).